The primary structure comprises 554 residues: (E)-beta-caryophyllene synthase (554 aa).

2 residues coordinate Mn(2+): D313 and D317. The DDXXD motif signature appears at 313-317 (DDIYD). Homodimerization stretches follow at residues 319 to 325 (YGTLDEL) and 391 to 427 (EAQW…LAVI). Residues D457 and E465 each coordinate Mn(2+).

Belongs to the terpene synthase family. As to quaternary structure, homodimer. It depends on Mn(2+) as a cofactor. Mg(2+) serves as cofactor. In terms of tissue distribution, expressed in peltate glandular trichomes. Present at low levels in flowers, leaves and stems.

The catalysed reaction is (2E,6E)-farnesyl diphosphate = (-)-(E)-beta-caryophyllene + diphosphate. It carries out the reaction (2E,6E)-farnesyl diphosphate = alpha-humulene + diphosphate. The protein operates within secondary metabolite biosynthesis; terpenoid biosynthesis. Involved in the biosynthesis of phenolic sesquiterpenes natural products. Sesquiterpene synthase converting (2E,6E)-farnesyl diphosphate (FPP) to (E)-beta-caryophyllene and alpha-humulene. The polypeptide is (E)-beta-caryophyllene synthase (Origanum vulgare (Wild marjoram)).